Reading from the N-terminus, the 710-residue chain is Chaperonin-containing T-complex member BBS12 (710 aa).

It belongs to the TCP-1 chaperonin family. BBS12 subfamily. As to quaternary structure, component of the chaperonin-containing T-complex (TRiC), a heterooligomeric complex of about 850 to 900 kDa that forms two stacked rings, 12 to 16 nm in diameter. Interacts with MKKS.

It localises to the cell projection. It is found in the cilium. Functionally, component of the chaperonin-containing T-complex (TRiC), a molecular chaperone complex that assists the folding of proteins upon ATP hydrolysis. As part of the TRiC complex may play a role in the assembly of BBSome, a complex involved in ciliogenesis regulating transports vesicles to the cilia. Involved in adipogenic differentiation. This is Chaperonin-containing T-complex member BBS12 (BBS12) from Pongo abelii (Sumatran orangutan).